Here is a 704-residue protein sequence, read N- to C-terminus: MESTANALVVKVSYGGVLRRFRVPVKANGQLDLEMAGLKEKIAALFNLSADAELSLTYSDEDGDVVALVDDNDLFDVTNQRLKFLKINVNAGVSTNSAAPESSGSSTPAGMPNPVSKIQKGINDVLMAVPNPMRDTISKVYMDLASKASTSSPVVGEMLDCISKLGQLSIPQESSPCSPVTKPGSSGASLSRDVPSAGGKKDISERTQTGRKPVNLNEPTGAHSKTSGHVPNSSGLGANFNECPFSGSTMNYSCPNPVNLNKHPRRVCHSKKSTNGDYWTSLGVFHKGIRCDGCGVLPITGPRFKSKVKEDYDLCTICYSVMGNEGDYTRMDKPVSVQHLHPFRGPFTQFPNPWLSHPVPRATNGGAPLRCTRPKLDSRFVLDVNVIDGTVVAPSAPFTKIWKMRNSGSLVWPQGTQIVWIGGDRFCNSLSVDLQIPKEGVPIYSELDVKVDFVAPELPGRYISYWRMATSDGAKFGQRVWVLIHVDASLKNSVVNEFHGLNLNASPSLDENFPSEFLGIMNYESAQPGSSSVNPGTVKGTDLEGEVGETQAVEKENLLVGEAHPAIPHGHSPSSSSSSFNMVDFPSMPAVEVLSGGSSSTTKDVPVPLQEDIEKNDVEITMLKELEEMGFKEIDLNKEILRDNEYNLEQSVDALCGVSEWDPILEELQEMGFCDDVTNKRLLKKNNGSIKGVVMDLLTGEKEA.

Met-1 is modified (N-acetylmethionine). The region spanning 7–92 (ALVVKVSYGG…KFLKINVNAG (86 aa)) is the PB1 domain. Polar residues-rich tracts occupy residues 95-108 (TNSAAPESSGSSTP), 171-189 (PQESSPCSPVTKPGSSGAS), and 223-233 (HSKTSGHVPNS). Disordered regions lie at residues 95-114 (TNSAAPESSGSSTPAGMPNP) and 171-233 (PQES…VPNS). Residues 286 to 336 (HKGIRCDGCGVLPITGPRFKSKVKEDYDLCTICYSVMGNEGDYTRMDKPVS) form a ZZ-type; degenerate zinc finger. Zn(2+) is bound by residues Cys-291, Cys-294, Cys-315, and Cys-318. The region spanning 657 to 701 (GVSEWDPILEELQEMGFCDDVTNKRLLKKNNGSIKGVVMDLLTGE) is the UBA domain. An LIR motif is present at residues 661 to 664 (WDPI).

As to quaternary structure, homodimer. Interacts with ATG8A, ATG8B, ATG8C, ATG8D, ATG8F and ATG8I. Binds to ubiquitin.

It is found in the cytoplasm. The protein resides in the vacuole. Autophagic substrate degraded in the vacuole by non-selective autophagy. Requires ATG8 protein expression to be recognized as an autophagic substrate. Acts probably as a receptor for autophagosomal degradation of ubiquitinated proteins. Targets ubiquitinated protein aggregates derived from denatured or damaged non-native proteins generated under stress conditions. Functions additively with the E3 ubiquitin-protein ligase CHIP for autophagosomal degradation of proteotoxic aggregates formed under stress conditions. The polypeptide is Protein NBR1 homolog (Arabidopsis thaliana (Mouse-ear cress)).